We begin with the raw amino-acid sequence, 204 residues long: Histone chaperone ASF1A (204 aa).

The interval 1-156 (MAKVQVNNVV…TRFHINWEDN (156 aa)) is interaction with histone H3, CHAF1B, and HIRA. Residues 31-37 (IEDLSED) carry the Required for interaction with HIRA motif. The segment at 155–204 (DNTEKLEDAESSNPNLPSLLSTDALPSASKGWSTSENSLNVMLESHMDCM) is required for interaction with HIRA. A Phosphoserine; by TLK2 modification is found at Ser192.

Belongs to the ASF1 family. In terms of assembly, interacts with histone H3 (via C-terminus), including histone H3.1, H3.2 and H3.3, and histone H4; the interaction with H3 is direct. Probably interacts with the heterodimeric form of H3-H4 taking the place of the second dimer. Interacts with the CHAF1A, CHAF1B and RBBP4 subunits of the CAF-1 complex. Interacts with CABIN1, HAT1, HIRA, NASP, TAF1 and UBN1. Found in a soluble complex with NASP and histones H3 and H4; the interaction with NASP is probably indirect and mediated by H3-H4. Interacts with CDAN1. Found in a cytosolic complex with IPO4 and histones H3 and H4. Interacts with CREBBP. In terms of processing, phosphorylated by TLK1 and TLK2. Highly phosphorylated in S-phase and at lower levels in M-phase. TLK2-mediated phosphorylation at Ser-192 prevents proteasome-dependent degradation.

It is found in the nucleus. Histone chaperone that facilitates histone deposition and histone exchange and removal during nucleosome assembly and disassembly. Cooperates with chromatin assembly factor 1 (CAF-1) to promote replication-dependent chromatin assembly and with HIRA to promote replication-independent chromatin assembly. Promotes homologous recombination-mediated repair of double-strand breaks (DSBs) at stalled or collapsed replication forks: acts by mediating histone replacement at DSBs, leading to recruitment of the MMS22L-TONSL complex and subsequent loading of RAD51. Also involved in the nuclear import of the histone H3-H4 dimer together with importin-4 (IPO4): specifically recognizes and binds newly synthesized histones with the monomethylation of H3 'Lys-9' and acetylation at 'Lys-14' (H3K9me1K14ac) marks, and diacetylation at 'Lys-5' and 'Lys-12' of H4 (H4K5K12ac) marks in the cytosol. Required for the formation of senescence-associated heterochromatin foci (SAHF) and efficient senescence-associated cell cycle exit. This chain is Histone chaperone ASF1A (ASF1A), found in Bos taurus (Bovine).